The sequence spans 535 residues: Bifunctional purine biosynthesis protein PurH (535 aa).

Residues 1–148 (MNNARPIRRA…KNHKDTTIIV (148 aa)) form the MGS-like domain.

The protein belongs to the PurH family.

It catalyses the reaction (6R)-10-formyltetrahydrofolate + 5-amino-1-(5-phospho-beta-D-ribosyl)imidazole-4-carboxamide = 5-formamido-1-(5-phospho-D-ribosyl)imidazole-4-carboxamide + (6S)-5,6,7,8-tetrahydrofolate. The enzyme catalyses IMP + H2O = 5-formamido-1-(5-phospho-D-ribosyl)imidazole-4-carboxamide. It participates in purine metabolism; IMP biosynthesis via de novo pathway; 5-formamido-1-(5-phospho-D-ribosyl)imidazole-4-carboxamide from 5-amino-1-(5-phospho-D-ribosyl)imidazole-4-carboxamide (10-formyl THF route): step 1/1. Its pathway is purine metabolism; IMP biosynthesis via de novo pathway; IMP from 5-formamido-1-(5-phospho-D-ribosyl)imidazole-4-carboxamide: step 1/1. The chain is Bifunctional purine biosynthesis protein PurH from Shewanella woodyi (strain ATCC 51908 / MS32).